The primary structure comprises 112 residues: UPF0145 protein RB3016 (112 aa).

The protein belongs to the UPF0145 family.

The chain is UPF0145 protein RB3016 from Rhodopirellula baltica (strain DSM 10527 / NCIMB 13988 / SH1).